A 532-amino-acid polypeptide reads, in one-letter code: 2,3-bisphosphoglycerate-independent phosphoglycerate mutase (532 aa).

2 residues coordinate Mn(2+): aspartate 13 and serine 63. Serine 63 functions as the Phosphoserine intermediate in the catalytic mechanism. Substrate-binding positions include histidine 124, 154–155 (RD), arginine 187, arginine 193, 262–265 (RPDR), and lysine 343. Mn(2+) is bound by residues aspartate 421, histidine 425, aspartate 463, histidine 464, and histidine 481.

It belongs to the BPG-independent phosphoglycerate mutase family. In terms of assembly, monomer. Mn(2+) is required as a cofactor.

It catalyses the reaction (2R)-2-phosphoglycerate = (2R)-3-phosphoglycerate. It participates in carbohydrate degradation; glycolysis; pyruvate from D-glyceraldehyde 3-phosphate: step 3/5. In terms of biological role, catalyzes the interconversion of 2-phosphoglycerate and 3-phosphoglycerate. This is 2,3-bisphosphoglycerate-independent phosphoglycerate mutase from Mesoplasma florum (strain ATCC 33453 / NBRC 100688 / NCTC 11704 / L1) (Acholeplasma florum).